A 441-amino-acid chain; its full sequence is FBD-associated F-box protein At5g18780 (441 aa).

The F-box domain maps to 10 to 56; the sequence is EDRISILPEPLLCHILSFLRTKDSVRTSVLSSRWRDLWLWVPRLDLD. An FBD domain is found at 366–410; it reads LPRCLISSLASVDIESPITDKATELKLVSYLLENSTTLKKLVLRL.

The polypeptide is FBD-associated F-box protein At5g18780 (Arabidopsis thaliana (Mouse-ear cress)).